Here is a 547-residue protein sequence, read N- to C-terminus: Chaperonin GroEL (547 aa).

Residues 30 to 33 (TLGP), Lys-51, 87 to 91 (DGTTT), Gly-415, 479 to 481 (NAA), and Asp-495 contribute to the ATP site.

It belongs to the chaperonin (HSP60) family. In terms of assembly, forms a cylinder of 14 subunits composed of two heptameric rings stacked back-to-back. Interacts with the co-chaperonin GroES.

It is found in the cytoplasm. The enzyme catalyses ATP + H2O + a folded polypeptide = ADP + phosphate + an unfolded polypeptide.. In terms of biological role, together with its co-chaperonin GroES, plays an essential role in assisting protein folding. The GroEL-GroES system forms a nano-cage that allows encapsulation of the non-native substrate proteins and provides a physical environment optimized to promote and accelerate protein folding. This Polynucleobacter necessarius subsp. necessarius (strain STIR1) protein is Chaperonin GroEL.